Reading from the N-terminus, the 350-residue chain is Ion-translocating oxidoreductase complex subunit D (350 aa).

The next 5 membrane-spanning stretches (helical) occupy residues 15–35, 36–56, 67–87, 88–108, and 122–142; these read QTQTLMLLVILACLPGLLAQT, WFFGWGSFIQILLALVTALGA, PIKPALMDGSAALTAVLIGLS, LPPLLPWWMLVLGTAFAIIIA, and PAMVAYVLLLVSFPVQMTSWL. Thr186 is modified (FMN phosphoryl threonine). 4 helical membrane-spanning segments follow: residues 213 to 233, 242 to 262, 264 to 284, and 299 to 316; these read WGGIGWSWVNLGYLLGGLFLL, IPGAILGSLLLAATLGYLMTP, ATATPMFHLFSGATMLGAFFI, and LVYGVLIGVLVYLIRRFG.

The protein belongs to the NqrB/RnfD family. In terms of assembly, the complex is composed of six subunits: RnfA, RnfB, RnfC, RnfD, RnfE and RnfG. It depends on FMN as a cofactor.

It localises to the cell inner membrane. Part of a membrane-bound complex that couples electron transfer with translocation of ions across the membrane. The chain is Ion-translocating oxidoreductase complex subunit D from Aeromonas salmonicida (strain A449).